A 225-amino-acid chain; its full sequence is Transcriptional activator protein CUP2 (225 aa).

Positions 1 to 40 (MVVINGVKYACETCIRGHRAAQCTHTDGPLQMIRRKGRPS) form a DNA-binding region, copper-fist. The tract at residues 1 to 108 (MVVINGVKYA…KSKGGSCHRR (108 aa)) is binds copper and DNA. Residues C11, C14, C23, and H25 each contribute to the Zn(2+) site. Residues 109–225 (ANDEAAHVNG…QVSSHNSHSQ (117 aa)) are required for transcriptional activation.

It is found in the nucleus. Trans-acting regulatory protein that activates transcription of the CUP1 gene (metallothionein) in response to copper ions. Binds to the CUP1 UAS sequence 5'-GCTTCTTTTCCGCTGA-3'. Binds DNA only in presence of copper or silver. Copper seems to alter the conformation of the protein. In Saccharomyces cerevisiae (strain ATCC 204508 / S288c) (Baker's yeast), this protein is Transcriptional activator protein CUP2 (CUP2).